Here is a 215-residue protein sequence, read N- to C-terminus: 3-demethoxyubiquinol 3-hydroxylase (215 aa).

The Fe cation site is built by E64, E94, H97, E146, E178, and H181.

It belongs to the COQ7 family. Fe cation serves as cofactor.

It is found in the cell membrane. It carries out the reaction a 5-methoxy-2-methyl-3-(all-trans-polyprenyl)benzene-1,4-diol + AH2 + O2 = a 3-demethylubiquinol + A + H2O. The protein operates within cofactor biosynthesis; ubiquinone biosynthesis. Catalyzes the hydroxylation of 2-nonaprenyl-3-methyl-6-methoxy-1,4-benzoquinol during ubiquinone biosynthesis. The chain is 3-demethoxyubiquinol 3-hydroxylase from Pseudomonas savastanoi pv. phaseolicola (strain 1448A / Race 6) (Pseudomonas syringae pv. phaseolicola (strain 1448A / Race 6)).